Reading from the N-terminus, the 381-residue chain is Sulfofructose kinase (381 aa).

ATP contacts are provided by residues Gly-10, 72-73 (RY), and 100-103 (GNGT). Residue Asn-101 coordinates Mg(2+). Asp-131 serves as the catalytic Proton acceptor.

Belongs to the phosphofructokinase type A (PFKA) family. Mg(2+) serves as cofactor.

It catalyses the reaction 6-deoxy-6-sulfo-D-fructose + ATP = 6-deoxy-6-sulfo-D-fructose 1-phosphate + ADP + H(+). Functionally, part of the sulfo-EMP2 pathway, a D-sulfoquinovose degradation pathway that produces sulfolactate (SL). Phosphorylates 6-deoxy-6-sulfo-D-fructose (SF) to 6-deoxy-6-sulfo-D-fructose 1-phosphate (SFP). In Alkalicoccus urumqiensis (Bacillus urumqiensis), this protein is Sulfofructose kinase.